Reading from the N-terminus, the 286-residue chain is tRNA pseudouridine synthase A (286 aa).

The active-site Nucleophile is Asp60. Tyr132 contacts substrate.

The protein belongs to the tRNA pseudouridine synthase TruA family. As to quaternary structure, homodimer.

The enzyme catalyses uridine(38/39/40) in tRNA = pseudouridine(38/39/40) in tRNA. Functionally, formation of pseudouridine at positions 38, 39 and 40 in the anticodon stem and loop of transfer RNAs. The sequence is that of tRNA pseudouridine synthase A from Mycobacterium leprae (strain TN).